A 250-amino-acid chain; its full sequence is 2,3-bisphosphoglycerate-dependent phosphoglycerate mutase (250 aa).

Substrate contacts are provided by residues 10-17 (RHGESQWN), 23-24 (TG), arginine 62, 89-92 (ERHY), lysine 100, 116-117 (RR), and 185-186 (GN). The active-site Tele-phosphohistidine intermediate is histidine 11. The active-site Proton donor/acceptor is glutamate 89.

Belongs to the phosphoglycerate mutase family. BPG-dependent PGAM subfamily. Homodimer.

It catalyses the reaction (2R)-2-phosphoglycerate = (2R)-3-phosphoglycerate. It participates in carbohydrate degradation; glycolysis; pyruvate from D-glyceraldehyde 3-phosphate: step 3/5. Functionally, catalyzes the interconversion of 2-phosphoglycerate and 3-phosphoglycerate. This is 2,3-bisphosphoglycerate-dependent phosphoglycerate mutase from Escherichia coli O139:H28 (strain E24377A / ETEC).